A 489-amino-acid polypeptide reads, in one-letter code: Membrane-bound acylglycerophosphatidylinositol O-acyltransferase frj (489 aa).

3 helical membrane-spanning segments follow: residues 2-22, 40-60, and 75-95; these read SIDDVIYVICLLGCIGAGSYV, VLVVVIVSGLHSLHCFVSLAL, and LVTFAVMFGYLVFFRIFDFYF. Residues asparagine 331 and histidine 364 contribute to the active site. The next 2 helical transmembrane spans lie at 405–425 and 433–453; these read VIFWIFKWFAFSYLGEAFLLS and FYSSVYHIGYISWAAMTALGF.

This sequence belongs to the membrane-bound acyltransferase family.

It localises to the membrane. The enzyme catalyses a 1-acyl-sn-glycero-3-phospho-(1D-myo-inositol) + (5Z,8Z,11Z,14Z)-eicosatetraenoyl-CoA = a 1-acyl-2-(5Z,8Z,11Z,14Z-eicosatetraenoyl)-sn-glycero-3-phospho-(1D-myo-inositol) + CoA. It carries out the reaction a 1-acyl-sn-glycero-3-phosphocholine + an acyl-CoA = a 1,2-diacyl-sn-glycero-3-phosphocholine + CoA. The catalysed reaction is (9Z)-hexadecenoyl-CoA + 1-hexadecanoyl-sn-glycero-3-phosphocholine = 1-hexadecanoyl-2-(9Z-hexadecenoyl)-sn-glycero-3-phosphocholine + CoA. It catalyses the reaction a 1-acyl-sn-glycero-3-phospho-L-serine + an acyl-CoA = a 1,2-diacyl-sn-glycero-3-phospho-L-serine + CoA. The enzyme catalyses 1-(9Z-octadecenoyl)-sn-glycero-3-phospho-L-serine + (9Z)-hexadecenoyl-CoA = 1-(9Z-octadecenoyl)-2-(9Z-hexadecenoyl)-sn-glycero-3-phospho-L-serine + CoA. It carries out the reaction a 1-acyl-sn-glycero-3-phosphoethanolamine + an acyl-CoA = a 1,2-diacyl-sn-glycero-3-phosphoethanolamine + CoA. The catalysed reaction is 1-hexadecanoyl-sn-glycero-3-phosphoethanolamine + (9Z)-hexadecenoyl-CoA = 1-hexadecanoyl-2-(9Z)-hexadecenoyl-sn-glycero-3-phosphoethanolamine + CoA. It participates in lipid metabolism; phospholipid metabolism. Acyltransferase that mediates the acylation of lysophospholipids to produce phospholipids (glycerophospholipids). Highest activity with lysophosphatidylinositol (1-acyl-sn-glycero-3-phospho-(1D-myo-inositol) or LPI) producing phosphatidylinositol (1,2-diacyl-sn-glycero-3-phospho-(1D-myo-inositol) or PI) (LPIAT activity), but also converts lysophosphatidylcholine (1-acyl-sn-glycero-3-phosphocholine or LPC) to phosphatidylcholine (1,2-diacyl-sn-glycero-3-phosphocholine or PC) (LPCAT activity), lysophosphatidylserine (1-acyl-2-hydroxy-sn-glycero-3-phospho-L-serine or LPS) to phosphatidylserine (1,2-diacyl-sn-glycero-3-phospho-L-serine or PS) (LPSAT activity), and lysophosphatidylethanolamine (1-acyl-sn-glycero-3-phosphoethanolamine or LPE) producing phosphatidylethanolamine (1,2-diacyl-sn-glycero-3-phosphoethanolamine or PE) (LPEAT activity). Has a preference for unsaturated fatty acid arachidonoyl-CoA ((5Z,8Z,11Z,14Z)-eicosatetraenoyl-CoA). Glycerophospholipids are important structural and functional components of cellular membrane, acyl-chain remodeling regulates the molecular species distribution of glycerophospholipids which can affect membrane fluidity and curvature. The chain is Membrane-bound acylglycerophosphatidylinositol O-acyltransferase frj from Drosophila melanogaster (Fruit fly).